Consider the following 1308-residue polypeptide: Receptor tyrosine-protein kinase erbB-4 (1308 aa).

The N-terminal stretch at 1 to 25 (MKPATGLWVWVSLLVAAGTVQPSDS) is a signal peptide. Residues 26–651 (QSVCAGTENK…STLPQHARTP (626 aa)) lie on the Extracellular side of the membrane. Cys29 and Cys56 are oxidised to a cystine. N-linked (GlcNAc...) asparagine glycosylation is found at Asn138, Asn174, and Asn181. Cystine bridges form between Cys156/Cys186, Cys189/Cys197, Cys193/Cys205, Cys213/Cys221, Cys217/Cys229, Cys230/Cys238, Cys234/Cys246, Cys249/Cys258, Cys262/Cys289, Cys293/Cys304, Cys308/Cys323, and Cys326/Cys330. Residue Asn253 is glycosylated (N-linked (GlcNAc...) asparagine). N-linked (GlcNAc...) asparagine glycosylation is found at Asn358, Asn410, Asn473, and Asn495. Disulfide bonds link Cys503/Cys512, Cys507/Cys520, Cys523/Cys532, Cys536/Cys552, Cys555/Cys569, Cys559/Cys577, Cys580/Cys589, Cys593/Cys614, Cys617/Cys625, and Cys621/Cys633. A glycan (N-linked (GlcNAc...) asparagine) is linked at Asn548. N-linked (GlcNAc...) asparagine glycosylation is present at Asn576. Asn620 carries N-linked (GlcNAc...) asparagine glycosylation. The helical transmembrane segment at 652-675 (LIAAGVIGGLFILVIVGLTFAVYV) threads the bilayer. Positions 676-684 (RRKSIKKKR) match the Nuclear localization signal motif. At 676 to 1308 (RRKSIKKKRA…PPYRHRNTVV (633 aa)) the chain is on the cytoplasmic side. The 268-residue stretch at 718-985 (LKRVKVLGSG…RMARDPQRYL (268 aa)) folds into the Protein kinase domain. Residues 724-732 (LGSGAFGTV), Lys751, 797-799 (QLM), and 843-848 (DLAARN) contribute to the ATP site. Catalysis depends on Asp843, which acts as the Proton acceptor. Phosphotyrosine; by autocatalysis occurs at positions 875, 1035, 1056, 1150, 1162, 1188, 1202, 1242, 1258, and 1284. Short sequence motifs (PPxY motif) lie at residues 1032-1035 (PPIY) and 1053-1056 (PPAY). Positions 1117–1150 (PHVQEDSSTQRYSADPTVFAPERSPRGELDEEGY) are disordered. The short motif at 1298–1301 (PPPY) is the PPxY motif 3 element. A PDZ-binding motif is present at residues 1306-1308 (TVV).

Belongs to the protein kinase superfamily. Tyr protein kinase family. EGF receptor subfamily. Monomer in the absence of bound ligand. Homodimer or heterodimer with another ERBB family member upon ligand binding, thus forming heterotetramers. Interacts with EGFR and ERBB2. Interacts with CBFA2T3. Interacts with DLG2 (via its PDZ domain), DLG3 (via its PDZ domain), DLG4 (via its PDZ domain) and SNTB2 (via its PDZ domain). Interacts with MUC1. Interacts (via its PPxy motifs) with WWOX. Interacts (via the PPxY motif 3 of isoform JM-A CYT-2) with YAP1 (via the WW domain 1 of isoform 1). Interacts (isoform JM-A CYT-1 and isoform JM-B CYT-1) with WWP1. Interacts (via its intracellular domain) with TRIM28. Interacts (via the intracellular domains of both CYT-1 and CYT-2 isoforms) with KAP1; the interaction does not phosphorylate KAP1 but represses ERBB4-mediated transcriptional activity. Interacts with PRPU, DDX23, MATR3, RBM15, ILF3, KAP1, U5S1, U2SURP, ITCH, HNRNPU, AP2A1, NULC, LEO1, WWP2, IGHG1, HXK1, GRB7 and SRRT. Interacts (phosphorylated isoform JM-A CYT-1 and isoform JM-B CYT-1) with PIK3R1. Interacts with SHC1. Interacts with GRB2. Interacts (soluble intracellular domain) with STAT5A. Interacts (soluble intracellular domain) with BCL2. Interacts (phosphorylated) with STAT1. In terms of processing, isoform JM-A CYT-1 and isoform JM-A CYT-2 are processed by ADAM17. Proteolytic processing in response to ligand or 12-O-tetradecanoylphorbol-13-acetate stimulation results in the production of 120 kDa soluble receptor forms and intermediate membrane-anchored 80 kDa fragments (m80HER4), which are further processed by a presenilin-dependent gamma-secretase to release a cytoplasmic intracellular domain (E4ICD; E4ICD1/s80Cyt1 or E4ICD2/s80Cyt2, depending on the isoform). Membrane-anchored 80 kDa fragments of the processed isoform JM-A CYT-1 are more readily degraded by the proteasome than fragments of isoform JM-A CYT-2, suggesting a prevalence of E4ICD2 over E4ICD1. Isoform JM-B CYT-1 and isoform JM-B CYT-2 lack the ADAM17 cleavage site and are not processed by ADAM17, precluding further processing by gamma-secretase. Autophosphorylated on tyrosine residues in response to ligand binding. Autophosphorylation occurs in trans, i.e. one subunit of the dimeric receptor phosphorylates tyrosine residues on the other subunit. Ligands trigger phosphorylation at specific tyrosine residues, thereby creating binding sites for scaffold proteins and effectors. Constitutively phosphorylated at a basal level when overexpressed in heterologous systems; ligand binding leads to increased phosphorylation. Phosphorylation at Tyr-1035 is important for interaction with STAT1. Phosphorylation at Tyr-1056 is important for interaction with PIK3R1. Phosphorylation at Tyr-1242 is important for interaction with SHC1. Phosphorylation at Tyr-1188 may also contribute to the interaction with SHC1. Isoform JM-A CYT-2 is constitutively phosphorylated on tyrosine residues in a ligand-independent manner. E4ICD2 but not E4ICD1 is phosphorylated on tyrosine residues. Post-translationally, ubiquitinated. During mitosis, the ERBB4 intracellular domain is ubiquitinated by the APC/C complex and targeted to proteasomal degradation. Isoform JM-A CYT-1 and isoform JM-B CYT-1 are ubiquitinated by WWP1. The ERBB4 intracellular domain (E4ICD1) is ubiquitinated, and this involves NEDD4. Expressed at highest levels in brain, heart, kidney, in addition to skeletal muscle, parathyroid, cerebellum, pituitary, spleen, testis and breast. Lower levels in thymus, lung, salivary gland, and pancreas. Isoform JM-A CYT-1 and isoform JM-B CYT-1 are expressed in cerebellum, but only the isoform JM-B is expressed in the heart.

The protein localises to the cell membrane. It is found in the nucleus. Its subcellular location is the mitochondrion. It carries out the reaction L-tyrosyl-[protein] + ATP = O-phospho-L-tyrosyl-[protein] + ADP + H(+). With respect to regulation, binding of a cognate ligand leads to dimerization and activation by autophosphorylation on tyrosine residues. In vitro kinase activity is increased by Mg(2+). Inhibited by PD153035, lapatinib, gefitinib (iressa, ZD1839), AG1478 and BIBX1382BS. Tyrosine-protein kinase that plays an essential role as cell surface receptor for neuregulins and EGF family members and regulates development of the heart, the central nervous system and the mammary gland, gene transcription, cell proliferation, differentiation, migration and apoptosis. Required for normal cardiac muscle differentiation during embryonic development, and for postnatal cardiomyocyte proliferation. Required for normal development of the embryonic central nervous system, especially for normal neural crest cell migration and normal axon guidance. Required for mammary gland differentiation, induction of milk proteins and lactation. Acts as cell-surface receptor for the neuregulins NRG1, NRG2, NRG3 and NRG4 and the EGF family members BTC, EREG and HBEGF. Ligand binding triggers receptor dimerization and autophosphorylation at specific tyrosine residues that then serve as binding sites for scaffold proteins and effectors. Ligand specificity and signaling is modulated by alternative splicing, proteolytic processing, and by the formation of heterodimers with other ERBB family members, thereby creating multiple combinations of intracellular phosphotyrosines that trigger ligand- and context-specific cellular responses. Mediates phosphorylation of SHC1 and activation of the MAP kinases MAPK1/ERK2 and MAPK3/ERK1. Isoform JM-A CYT-1 and isoform JM-B CYT-1 phosphorylate PIK3R1, leading to the activation of phosphatidylinositol 3-kinase and AKT1 and protect cells against apoptosis. Isoform JM-A CYT-1 and isoform JM-B CYT-1 mediate reorganization of the actin cytoskeleton and promote cell migration in response to NRG1. Isoform JM-A CYT-2 and isoform JM-B CYT-2 lack the phosphotyrosine that mediates interaction with PIK3R1, and hence do not phosphorylate PIK3R1, do not protect cells against apoptosis, and do not promote reorganization of the actin cytoskeleton and cell migration. Proteolytic processing of isoform JM-A CYT-1 and isoform JM-A CYT-2 gives rise to the corresponding soluble intracellular domains (4ICD) that translocate to the nucleus, promote nuclear import of STAT5A, activation of STAT5A, mammary epithelium differentiation, cell proliferation and activation of gene expression. The ERBB4 soluble intracellular domains (4ICD) colocalize with STAT5A at the CSN2 promoter to regulate transcription of milk proteins during lactation. The ERBB4 soluble intracellular domains can also translocate to mitochondria and promote apoptosis. This Homo sapiens (Human) protein is Receptor tyrosine-protein kinase erbB-4 (ERBB4).